The sequence spans 247 residues: Adenosylcobinamide-GDP ribazoletransferase (247 aa).

Transmembrane regions (helical) follow at residues Ile34–Val54, Ala57–Gly77, Gly113–Leu133, Ile138–Tyr158, and Val194–Ile214.

The protein belongs to the CobS family. The cofactor is Mg(2+).

The protein localises to the cell inner membrane. It carries out the reaction alpha-ribazole + adenosylcob(III)inamide-GDP = adenosylcob(III)alamin + GMP + H(+). The enzyme catalyses alpha-ribazole 5'-phosphate + adenosylcob(III)inamide-GDP = adenosylcob(III)alamin 5'-phosphate + GMP + H(+). It participates in cofactor biosynthesis; adenosylcobalamin biosynthesis; adenosylcobalamin from cob(II)yrinate a,c-diamide: step 7/7. In terms of biological role, joins adenosylcobinamide-GDP and alpha-ribazole to generate adenosylcobalamin (Ado-cobalamin). Also synthesizes adenosylcobalamin 5'-phosphate from adenosylcobinamide-GDP and alpha-ribazole 5'-phosphate. The polypeptide is Adenosylcobinamide-GDP ribazoletransferase (Shigella flexneri serotype 5b (strain 8401)).